A 267-amino-acid polypeptide reads, in one-letter code: MTQTQGPTASALTRRIIPCLDVTAGRVVKGVNFVNLTDAGDPVEIARRYNEQGADELTFLDITATSDGRDLILPIIEQVASQVFIPLTVGGGVRQVSDVQRLLNAGADKISINSAAISNPELVRAAADYHGSQCIVVAIDARRVSSEGEAARWEVFTHGGRRATGLDAVAWARRMAAYGAGEILLTSMDRDGTKSGFDLELTRTVSDAVPVPVIASGGVGNLEHLAEGVTTGRASAVLAASIFHFGQHTVRECKAFMAQRGIDVRLD.

Active-site residues include D21 and D140.

Belongs to the HisA/HisF family. As to quaternary structure, heterodimer of HisH and HisF.

The protein localises to the cytoplasm. The enzyme catalyses 5-[(5-phospho-1-deoxy-D-ribulos-1-ylimino)methylamino]-1-(5-phospho-beta-D-ribosyl)imidazole-4-carboxamide + L-glutamine = D-erythro-1-(imidazol-4-yl)glycerol 3-phosphate + 5-amino-1-(5-phospho-beta-D-ribosyl)imidazole-4-carboxamide + L-glutamate + H(+). The protein operates within amino-acid biosynthesis; L-histidine biosynthesis; L-histidine from 5-phospho-alpha-D-ribose 1-diphosphate: step 5/9. Functionally, IGPS catalyzes the conversion of PRFAR and glutamine to IGP, AICAR and glutamate. The HisF subunit catalyzes the cyclization activity that produces IGP and AICAR from PRFAR using the ammonia provided by the HisH subunit. This is Imidazole glycerol phosphate synthase subunit HisF from Bordetella avium (strain 197N).